The primary structure comprises 262 residues: Merozoite surface protein 2 (262 aa).

Positions 1-20 (MKVIKTLSIINFFIFVTFNI) are cleaved as a signal peptide. N-linked (GlcNAc...) asparagine glycans are attached at residues Asn-22 and Asn-36. The tract at residues 44–188 (AESKPPTGTG…EQTESPELQS (145 aa)) is polymorphic region. Positions 44–223 (AESKPPTGTG…DSQKECTDGN (180 aa)) are disordered. A compositionally biased stretch (gly residues) spans 51-66 (GTGGSGSAGSGAGASA). Residues 67–111 (GNGANPGADAERSPSTPATPATPATTTTTTTTNDAEASTSTSSEN) show a composition bias toward low complexity. Basic and acidic residues predominate over residues 112–127 (PNHKNAETNPKGKGEV). Composition is skewed to polar residues over residues 129–155 (KPNQ…NVPP) and 162–190 (KSPT…QSAP). The N-linked (GlcNAc...) asparagine glycan is linked to Asn-139. A glycan (N-linked (GlcNAc...) asparagine) is linked at Asn-211. Cys-219 and Cys-227 form a disulfide bridge. 2 N-linked (GlcNAc...) asparagine glycosylation sites follow: Asn-235 and Asn-236. Asn-236 is lipidated: GPI-anchor amidated asparagine. Positions 237–262 (SSNIASINKFVVLISATLVLSFAIFI) are cleaved as a propeptide — removed in mature form.

The protein resides in the cell membrane. In terms of biological role, may play a role in the merozoite attachment to the erythrocyte. The polypeptide is Merozoite surface protein 2 (Plasmodium falciparum (isolate Camp / Malaysia)).